Here is a 400-residue protein sequence, read N- to C-terminus: Enoyl-[acyl-carrier-protein] reductase [NADH] (400 aa).

NAD(+) is bound by residues 48–53 (GSSSGY), 74–75 (FE), 111–112 (DA), and 139–140 (LA). Tyr225 contributes to the substrate binding site. The active-site Proton donor is Tyr235. NAD(+)-binding positions include Lys244 and 273 to 275 (VVT).

It belongs to the TER reductase family. As to quaternary structure, monomer.

The catalysed reaction is a 2,3-saturated acyl-[ACP] + NAD(+) = a (2E)-enoyl-[ACP] + NADH + H(+). It participates in lipid metabolism; fatty acid biosynthesis. Functionally, involved in the final reduction of the elongation cycle of fatty acid synthesis (FAS II). Catalyzes the reduction of a carbon-carbon double bond in an enoyl moiety that is covalently linked to an acyl carrier protein (ACP). This Shewanella oneidensis (strain ATCC 700550 / JCM 31522 / CIP 106686 / LMG 19005 / NCIMB 14063 / MR-1) protein is Enoyl-[acyl-carrier-protein] reductase [NADH].